The sequence spans 152 residues: Ribosome maturation factor RimP (152 aa).

Belongs to the RimP family.

It localises to the cytoplasm. Functionally, required for maturation of 30S ribosomal subunits. This is Ribosome maturation factor RimP from Aeromonas hydrophila subsp. hydrophila (strain ATCC 7966 / DSM 30187 / BCRC 13018 / CCUG 14551 / JCM 1027 / KCTC 2358 / NCIMB 9240 / NCTC 8049).